The primary structure comprises 262 residues: Troponin T, slow skeletal muscle (262 aa).

The span at methionine 1–proline 31 shows a compositional bias: acidic residues. Disordered stretches follow at residues methionine 1–aspartate 62 and glutamate 109–valine 153. A Phosphoserine; by CK2 modification is found at serine 2. A compositionally biased stretch (basic and acidic residues) spans valine 32–lysine 41. Pro residues predominate over residues serine 43–isoleucine 55. A compositionally biased stretch (basic and acidic residues) spans glutamate 109–lysine 149.

The protein belongs to the troponin T family. As to quaternary structure, interacts with TPM3. In terms of tissue distribution, expressed in adult soleus muscle.

Troponin T is the tropomyosin-binding subunit of troponin, the thin filament regulatory complex which confers calcium-sensitivity to striated muscle actomyosin ATPase activity. The sequence is that of Troponin T, slow skeletal muscle (Tnnt1) from Mus musculus (Mouse).